A 146-amino-acid chain; its full sequence is Thyroid hormone-inducible hepatic protein (146 aa).

The disordered stretch occupies residues 83–104; that stretch reads KVAGSEENGTAETEEVEDESAS. The segment covering 94–104 has biased composition (acidic residues); it reads ETEEVEDESAS.

It belongs to the SPOT14 family. In terms of assembly, homodimer. Heterodimer with MID1IP1. Interacts with THRB and PLAGL1. As to expression, mainly expressed in tissues that synthesize triglycerides.

It is found in the nucleus. Its subcellular location is the cytoplasm. In terms of biological role, plays a role in the regulation of lipogenesis, especially in lactating mammary gland. Important for the biosynthesis of triglycerides with medium-length fatty acid chains. May modulate lipogenesis by interacting with MID1IP1 and preventing its interaction with ACACA. May function as transcriptional coactivator. May modulate the transcription factor activity of THRB. The chain is Thyroid hormone-inducible hepatic protein (THRSP) from Homo sapiens (Human).